The chain runs to 303 residues: Hemolysin E (303 aa).

Cysteines 87 and 285 form a disulfide. Residues 179–199 (AGAAAGIVAGPFGLIISYSIA) traverse the membrane as a helical segment.

It belongs to the hemolysin E family. As to quaternary structure, monomer and oligomer. In periplasm, it is present as a monomer, while in outer membrane vesicles, it oligomerizes to form a pore structure that is active. The pore is formed by a dodecamer. In terms of processing, in periplasm, it forms a disulfide bond, which prevents the oligomerization. In outer membrane vesicles, the redox status prevents formation of the disulfide bond, leading to oligomerization and pore formation.

It is found in the secreted. It localises to the periplasm. Its subcellular location is the host cell membrane. Toxin, which has some hemolytic activity towards mammalian cells. Acts by forming a pore-like structure upon contact with mammalian cells. This chain is Hemolysin E (hlyE), found in Salmonella paratyphi A (strain ATCC 9150 / SARB42).